Reading from the N-terminus, the 117-residue chain is Hainantoxin-XV-5 (117 aa).

A signal peptide spans 1–20 (MKLCAVIIASLLVCVAVASS). Residues 20–55 (SSDNQKEFAQEKEMTREETQSLGEHEKDDEVTGSEE) form a disordered region. Positions 21–56 (SDNQKEFAQEKEMTREETQSLGEHEKDDEVTGSEER) are excised as a propeptide. Residues 23 to 55 (NQKEFAQEKEMTREETQSLGEHEKDDEVTGSEE) show a composition bias toward basic and acidic residues. Intrachain disulfides connect Cys58–Cys72, Cys65–Cys78, Cys69–Cys115, and Cys71–Cys91.

This sequence belongs to the neurotoxin 03 (Tx2) family. 02 subfamily. HNTX-XV sub-subfamily. In terms of tissue distribution, expressed by the venom gland.

It localises to the secreted. Functionally, putative ion channel inhibitor. The chain is Hainantoxin-XV-5 from Cyriopagopus hainanus (Chinese bird spider).